We begin with the raw amino-acid sequence, 307 residues long: Ornithine carbamoyltransferase (307 aa).

Carbamoyl phosphate is bound by residues 50-53 (STRT), Gln-77, Arg-101, and 128-131 (HPCQ). Residues Asn-160, Asp-224, and 228 to 229 (SM) contribute to the L-ornithine site. Residues 264 to 265 (CL) and Arg-292 contribute to the carbamoyl phosphate site.

This sequence belongs to the aspartate/ornithine carbamoyltransferase superfamily. OTCase family.

It localises to the cytoplasm. It catalyses the reaction carbamoyl phosphate + L-ornithine = L-citrulline + phosphate + H(+). It participates in amino-acid biosynthesis; L-arginine biosynthesis; L-arginine from L-ornithine and carbamoyl phosphate: step 1/3. In terms of biological role, reversibly catalyzes the transfer of the carbamoyl group from carbamoyl phosphate (CP) to the N(epsilon) atom of ornithine (ORN) to produce L-citrulline. This chain is Ornithine carbamoyltransferase, found in Mycolicibacterium gilvum (strain PYR-GCK) (Mycobacterium gilvum (strain PYR-GCK)).